The following is a 35-amino-acid chain: Photosystem II reaction center protein T (35 aa).

Residues 3-23 (ALVYTFLLVSTLGIIFFAIFF) form a helical membrane-spanning segment.

This sequence belongs to the PsbT family. As to quaternary structure, PSII is composed of 1 copy each of membrane proteins PsbA, PsbB, PsbC, PsbD, PsbE, PsbF, PsbH, PsbI, PsbJ, PsbK, PsbL, PsbM, PsbT, PsbY, PsbZ, Psb30/Ycf12, at least 3 peripheral proteins of the oxygen-evolving complex and a large number of cofactors. It forms dimeric complexes.

It is found in the plastid. Its subcellular location is the chloroplast thylakoid membrane. Found at the monomer-monomer interface of the photosystem II (PS II) dimer, plays a role in assembly and dimerization of PSII. PSII is a light-driven water plastoquinone oxidoreductase, using light energy to abstract electrons from H(2)O, generating a proton gradient subsequently used for ATP formation. The sequence is that of Photosystem II reaction center protein T from Cycas revoluta (Sago palm).